Consider the following 607-residue polypeptide: tRNA uridine 5-carboxymethylaminomethyl modification enzyme MnmG (607 aa).

FAD is bound by residues 11-16 (GGGHAG), V123, and S178. 270-284 (GPRYCPSVEDKIVRF) contributes to the NAD(+) binding site. Residue Q367 participates in FAD binding.

It belongs to the MnmG family. Homodimer. Heterotetramer of two MnmE and two MnmG subunits. The cofactor is FAD.

The protein resides in the cytoplasm. NAD-binding protein involved in the addition of a carboxymethylaminomethyl (cmnm) group at the wobble position (U34) of certain tRNAs, forming tRNA-cmnm(5)s(2)U34. The sequence is that of tRNA uridine 5-carboxymethylaminomethyl modification enzyme MnmG from Metamycoplasma arthritidis (strain 158L3-1) (Mycoplasma arthritidis).